A 444-amino-acid polypeptide reads, in one-letter code: Pestheic acid cluster transcriptional regulator 2 (444 aa).

Over residues 1–22 (MEAADPNNNLTITSPSTLLSNP) the composition is skewed to polar residues. The tract at residues 1 to 31 (MEAADPNNNLTITSPSTLLSNPTQPPAQPLK) is disordered. A DNA-binding region (zn(2)-C6 fungal-type) is located at residues 36-63 (CHACASSKVKCHKEKPTCSRCRKRGITC). The interval 326–348 (ARVGSGVSTHTTAGQYEPQVEQQ) is disordered. Over residues 331-348 (GVSTHTTAGQYEPQVEQQ) the composition is skewed to polar residues.

The protein localises to the nucleus. Functionally, transcription factor that, with ptaR1 and ptaR3, coregulates the expression of the gene cluster that mediates the biosynthesis of pestheic acid, a diphenyl ether which is a biosynthetic precursor of the unique chloropupukeananes. The protein is Pestheic acid cluster transcriptional regulator 2 of Pestalotiopsis fici (strain W106-1 / CGMCC3.15140).